The sequence spans 1556 residues: Disco-interacting protein 2 homolog C (1556 aa).

In terms of domain architecture, DMAP1-binding spans 7–120 (EGMALPLEVR…PMPSKRRSLV (114 aa)). 2 disordered regions span residues 47–157 (YLPQ…SQGS) and 170–189 (GSTT…SGAA). Residues 81–93 (GSRDERYRSDVHT) are compositionally biased toward basic and acidic residues. Polar residues-rich tracts occupy residues 120–136 (VVQT…TSSG) and 144–157 (QGDS…SQGS). Positions 170-183 (GSTTSTTSSSSTQS) are enriched in low complexity. Threonine 264 bears the Phosphothreonine mark.

Belongs to the DIP2 family.

The chain is Disco-interacting protein 2 homolog C (DIP2C) from Homo sapiens (Human).